Reading from the N-terminus, the 247-residue chain is uncharacterized protein (247 aa).

This is an uncharacterized protein from Saccharomyces cerevisiae (strain ATCC 204508 / S288c) (Baker's yeast).